The following is a 152-amino-acid chain: CASP-like protein 5B1 (152 aa).

The Cytoplasmic segment spans residues 1–11 (MKKMIGSPGTM). The chain crosses the membrane as a helical span at residues 12–32 (SGLILRLGQCATAAASIGVMV). Residues 33–42 (SSYDFSNYTA) are Extracellular-facing. Asn-39 carries an N-linked (GlcNAc...) asparagine glycan. The helical transmembrane segment at 43-63 (FCFLVASMGLQLIWSFGLACL) threads the bilayer. The Cytoplasmic portion of the chain corresponds to 64-77 (DVYAIRRKSDLRSP). A helical membrane pass occupies residues 78–98 (ILLSLFTVGDWVTALLALAAA). Residues 99-131 (CSSAGVTVLFTKDTEFCRQQPALSCDRFQISVG) lie on the Extracellular side of the membrane. A helical membrane pass occupies residues 132 to 152 (LSFFNWFLAAISSHTMFWILI).

It belongs to the Casparian strip membrane proteins (CASP) family. As to quaternary structure, homodimer and heterodimers. Expressed in leaves, exclusively in hair cells (e.g. differentiated trichomes and immature cells).

It localises to the cell membrane. In Arabidopsis thaliana (Mouse-ear cress), this protein is CASP-like protein 5B1.